The chain runs to 610 residues: Pentatricopeptide repeat-containing protein At3g15590, mitochondrial (610 aa).

The transit peptide at 1–71 (MYSLSRILQR…FSRFFGIHKL (71 aa)) directs the protein to the mitochondrion. Residues 88–142 (EELSESEEAVPVSGDVPEGVVDDDSLFEPELGSDNDDLEIEEKHSKDGGKPTKKR) form a disordered region. Acidic residues predominate over residues 107-127 (VVDDDSLFEPELGSDNDDLEI). Residues 128-137 (EEKHSKDGGK) are compositionally biased toward basic and acidic residues. PPR repeat units lie at residues 241–275 (GEVV…KFPT), 276–309 (SVFA…NIKP), 310–344 (SRAT…GIEL), 345–379 (DPEL…GLQQ), 380–410 (TPWV…VDQN), 412–442 (RYDN…LVEK), 447–481 (PMMP…GIAI), 482–517 (GPST…KMRP), and 518–552 (MFTT…SYAA).

Belongs to the PPR family. P subfamily.

It localises to the mitochondrion. The polypeptide is Pentatricopeptide repeat-containing protein At3g15590, mitochondrial (Arabidopsis thaliana (Mouse-ear cress)).